We begin with the raw amino-acid sequence, 217 residues long: Phosphatidylinositol phosphate synthase (217 aa).

2 helical membrane passes run 28–49 and 55–74; these read LTPD…LTLF and FAGA…DGAM. 31–34 is a binding site for a CDP-1,2-diacyl-sn-glycerol; sequence DVVT. The Mg(2+) site is built by aspartate 68 and aspartate 71. A CDP-1,2-diacyl-sn-glycerol-binding residues include glycine 72, arginine 76, and threonine 82. 2 residues coordinate Mg(2+): aspartate 89 and aspartate 93. Residue aspartate 93 is the Proton acceptor of the active site. 4 consecutive transmembrane segments (helical) span residues 95–112, 118–136, 156–173, and 179–200; these read ISDG…AFHM, VIAT…YIKA, LIIV…FVPW, and VGMW…HTVW.

It belongs to the CDP-alcohol phosphatidyltransferase class-I family. As to quaternary structure, homodimer. It depends on Mg(2+) as a cofactor.

Its subcellular location is the cell membrane. It carries out the reaction a CDP-1,2-diacyl-sn-glycerol + 1D-myo-inositol 3-phosphate = a 1,2-diacyl-sn-glycero-3-phospho-(1D-myo-inositol-3-phosphate) + CMP + H(+). It catalyses the reaction 1,2-di-(9Z-octadecenoyl)-sn-glycero-3-cytidine-5'-diphosphate + 1D-myo-inositol 3-phosphate = 1,2-di-(9Z-octadecenoyl)-sn-glycero-3-phospho-(1D-myo-inositol-3-phosphate) + CMP + H(+). The protein operates within phospholipid metabolism; phosphatidylinositol phosphate biosynthesis. Its activity is regulated as follows. Competitively inhibited by several inositol 1-phosphate analogs, including the phosphonate analog 1-deoxy-1-phosphonomethyl-myo-inositol (Ino-C-P). In terms of biological role, catalyzes the conjugation of the 1'-hydroxyl group of D-myo-inositol-3-phosphate (also named L-myo-inositol-1-phosphate) with a lipid tail of cytidine diphosphate diacylglycerol (CDP-DAG), forming phosphatidylinositol phosphate (PIP) and CMP. PIP is a precursor of phosphatidylinositol (PI) which is an essential lipid for mycobacteria required for formation of their cell wall. The polypeptide is Phosphatidylinositol phosphate synthase (Mycobacterium bovis (strain BCG / Pasteur 1173P2)).